The following is a 448-amino-acid chain: Probable glycine dehydrogenase (decarboxylating) subunit 1 (448 aa).

Belongs to the GcvP family. N-terminal subunit subfamily. The glycine cleavage system is composed of four proteins: P, T, L and H. In this organism, the P 'protein' is a heterodimer of two subunits.

The catalysed reaction is N(6)-[(R)-lipoyl]-L-lysyl-[glycine-cleavage complex H protein] + glycine + H(+) = N(6)-[(R)-S(8)-aminomethyldihydrolipoyl]-L-lysyl-[glycine-cleavage complex H protein] + CO2. The glycine cleavage system catalyzes the degradation of glycine. The P protein binds the alpha-amino group of glycine through its pyridoxal phosphate cofactor; CO(2) is released and the remaining methylamine moiety is then transferred to the lipoamide cofactor of the H protein. The chain is Probable glycine dehydrogenase (decarboxylating) subunit 1 from Parvibaculum lavamentivorans (strain DS-1 / DSM 13023 / NCIMB 13966).